The primary structure comprises 376 residues: Flagellin B (376 aa).

Residues 103–129 (SNSSSERRAIQEEVSALNDELNRIAET) adopt a coiled-coil conformation.

The protein belongs to the bacterial flagellin family. As to quaternary structure, heteromer of multiple flagellin subunits including FlaA, FlaB, FlaC, FlaD and FlaE.

The protein resides in the secreted. Its subcellular location is the bacterial flagellum. Its function is as follows. Flagellin is the subunit protein which polymerizes to form the filaments of bacterial flagella. FlaB is not essential for flagellar synthesis and motility. This Vibrio cholerae serotype O1 (strain ATCC 39541 / Classical Ogawa 395 / O395) protein is Flagellin B (flaB).